A 357-amino-acid chain; its full sequence is Isoflavone 7-O-methyltransferase (357 aa).

S-adenosyl-L-methionine is bound by residues 200–203 (VGGG), Asp224, 224–225 (DR), 244–245 (DM), and Lys258. His262 acts as the Proton acceptor in catalysis.

Belongs to the class I-like SAM-binding methyltransferase superfamily. Cation-independent O-methyltransferase family. COMT subfamily.

The catalysed reaction is a 7-hydroxyisoflavone + S-adenosyl-L-methionine = a 7-methoxyisoflavone + S-adenosyl-L-homocysteine + H(+). Functionally, 7-O-methyltransferase involved in the biosynthesis of isoformononetin. Can use daidzein as substrate, but not medicarpin or 2,7,4'-trihydroxyisoflavanone. The sequence is that of Isoflavone 7-O-methyltransferase (D7OMT) from Glycyrrhiza echinata (Licorice).